The chain runs to 197 residues: Ribosome maturation factor RimP (197 aa).

The protein belongs to the RimP family.

The protein resides in the cytoplasm. Its function is as follows. Required for maturation of 30S ribosomal subunits. The sequence is that of Ribosome maturation factor RimP from Acidovorax ebreus (strain TPSY) (Diaphorobacter sp. (strain TPSY)).